The sequence spans 313 residues: Malate dehydrogenase (313 aa).

NAD(+) is bound by residues 11–16 and aspartate 35; that span reads GAGNIG. Arginine 84 and arginine 90 together coordinate substrate. Residues asparagine 97 and 120-122 each bind NAD(+); that span reads VTN. Asparagine 122 and arginine 153 together coordinate substrate. Histidine 177 functions as the Proton acceptor in the catalytic mechanism.

Belongs to the LDH/MDH superfamily. MDH type 3 family.

The catalysed reaction is (S)-malate + NAD(+) = oxaloacetate + NADH + H(+). Functionally, catalyzes the reversible oxidation of malate to oxaloacetate. This is Malate dehydrogenase from Ehrlichia canis (strain Jake).